The chain runs to 127 residues: MSYRKLGRTSSQRKALLRDLTTDLIVNGRITTTEARAKEVRKTADKMITLAKHGDLASRRKAAAFVRNVVADVKEDGDDIRVQSALQNLFEELAPKYADRNGGYTRILKTMPRRGDGAPMVILELVD.

Belongs to the bacterial ribosomal protein bL17 family. Part of the 50S ribosomal subunit. Contacts protein L32.

The polypeptide is Large ribosomal subunit protein bL17 (Limosilactobacillus reuteri (strain DSM 20016) (Lactobacillus reuteri)).